The sequence spans 298 residues: MAGQLREYRRRIKTVQSTKKITKAMELIAASRIAKARARVAASRPYAEEITRVISAVASQTTIAHPLTTERPEPTRAAVVVITSDRGLAGGYSSNALKRAGELVELLREEGKEPLLYAVGRKAGTYYRFRGRPLAGDYTGFSEQPSYSDAKAVADALITAFTTPTEEGGVDEIHLVFTEYVSAMTQNAVAHRLLPMVLREHDEPPAGGPLPNYEFEPSAEAVLDALLPRYVESRLYAALLESAASESAARQRAMKSATDNAEDLIKTYTRAANRARQDAITQEISEIVGGANALASGA.

Belongs to the ATPase gamma chain family. F-type ATPases have 2 components, CF(1) - the catalytic core - and CF(0) - the membrane proton channel. CF(1) has five subunits: alpha(3), beta(3), gamma(1), delta(1), epsilon(1). CF(0) has three main subunits: a, b and c.

It localises to the cell membrane. Produces ATP from ADP in the presence of a proton gradient across the membrane. The gamma chain is believed to be important in regulating ATPase activity and the flow of protons through the CF(0) complex. The polypeptide is ATP synthase gamma chain (Parafrankia sp. (strain EAN1pec)).